Here is a 388-residue protein sequence, read N- to C-terminus: Probable E3 ubiquitin-protein ligase LOG2 (388 aa).

The disordered stretch occupies residues 1-43; it reads MGNISSSGGEGRRRRRRNHTAAPPPPPPPPSSSLPPPPLPTEI. Gly-2 is lipidated: N-myristoyl glycine. The segment covering 22-40 has biased composition (pro residues); sequence APPPPPPPPSSSLPPPPLP. The interval 159-281 is DAR2 domain; it reads FTFDATVSGR…GEIKIRVVKQ (123 aa). The RING-type; atypical zinc-finger motif lies at 319-358; that stretch reads CVICLSEPRDTTVLPCRHMCMCSGCAKVLRFQTNRCPICR. The tract at residues 368 to 388 is disordered; sequence KVHGNNGSGNNTGQGETVEQE.

It belongs to the RING-type zinc finger family. LOG2 subfamily. As to quaternary structure, interacts with GDU1. Post-translationally, myristoylated (in vitro). As to expression, expressed in the vascular tissues in both phloem and xylem parenchyma cells.

It localises to the cell membrane. The enzyme catalyses S-ubiquitinyl-[E2 ubiquitin-conjugating enzyme]-L-cysteine + [acceptor protein]-L-lysine = [E2 ubiquitin-conjugating enzyme]-L-cysteine + N(6)-ubiquitinyl-[acceptor protein]-L-lysine.. It functions in the pathway protein modification; protein ubiquitination. Acts as an E3 ubiquitin-protein ligase, or as part of E3 complex, which accepts ubiquitin from specific E2 ubiquitin-conjugating enzymes and then transfers it to substrates (in vitro). Required for GLUTAMINE DUMPER 1(GDU1)-induced amino acid secretion and for amino acid homeostasis. Ubiquitinates GDU1 (in vitro). The polypeptide is Probable E3 ubiquitin-protein ligase LOG2 (LOG2) (Arabidopsis thaliana (Mouse-ear cress)).